Consider the following 1297-residue polypeptide: DNA-directed RNA polymerase subunit beta'' (1297 aa).

Zn(2+) is bound by residues Cys220, Cys293, Cys300, and Cys303. The span at 1278–1288 shows a compositional bias: basic residues; the sequence is RRRKQNTKTRK. Residues 1278 to 1297 are disordered; the sequence is RRRKQNTKTRKNNLFSLNEK.

This sequence belongs to the RNA polymerase beta' chain family. RpoC2 subfamily. In terms of assembly, in plastids the minimal PEP RNA polymerase catalytic core is composed of four subunits: alpha, beta, beta', and beta''. When a (nuclear-encoded) sigma factor is associated with the core the holoenzyme is formed, which can initiate transcription. Zn(2+) is required as a cofactor.

The protein resides in the plastid. Its subcellular location is the chloroplast. The catalysed reaction is RNA(n) + a ribonucleoside 5'-triphosphate = RNA(n+1) + diphosphate. Its function is as follows. DNA-dependent RNA polymerase catalyzes the transcription of DNA into RNA using the four ribonucleoside triphosphates as substrates. This chain is DNA-directed RNA polymerase subunit beta'', found in Welwitschia mirabilis (Tree tumbo).